The primary structure comprises 115 residues: NADH-ubiquinone oxidoreductase chain 3 (115 aa).

A run of 3 helical transmembrane segments spans residues 4 to 24, 55 to 75, and 84 to 104; these read LLTM…AFWL, FFLV…LLPI, and INTM…GLAY.

Belongs to the complex I subunit 3 family. Core subunit of respiratory chain NADH dehydrogenase (Complex I) which is composed of 45 different subunits. Interacts with TMEM186. Interacts with TMEM242.

The protein resides in the mitochondrion inner membrane. It catalyses the reaction a ubiquinone + NADH + 5 H(+)(in) = a ubiquinol + NAD(+) + 4 H(+)(out). In terms of biological role, core subunit of the mitochondrial membrane respiratory chain NADH dehydrogenase (Complex I) which catalyzes electron transfer from NADH through the respiratory chain, using ubiquinone as an electron acceptor. Essential for the catalytic activity of complex I. In Neotoma lepida (Desert woodrat), this protein is NADH-ubiquinone oxidoreductase chain 3.